The following is a 399-amino-acid chain: uncharacterized protein (399 aa).

It belongs to the AdoMet synthetase 2 family.

This is an uncharacterized protein from Streptococcus pyogenes serotype M1.